We begin with the raw amino-acid sequence, 2498 residues long: Nuclear receptor corepressor 1 (2498 aa).

Disordered regions lie at residues 1–38 (MSSSGYPPNQGAFSTEQGRYSSHPVQYTFPSSRHQQEY), 54–84 (IQQQQLRRRPSLLSEFHPVSDRPQDRRSGYD), 134–169 (SEVKKEQGLSSKHESSSSPLSGQPGDDQDASPSKLS), and 198–223 (QQQLEEEAAKPPEPEKPVSPPPVEQK). Composition is skewed to basic and acidic residues over residues 71–82 (PVSDRPQDRRSG), 134–148 (SEVKKEQGLSSKHES), and 204–213 (EAAKPPEPEK). An interaction with tbl1xr1-A region spans residues 154–304 (SGQPGDDQDA…REQNICQRYD (151 aa)). Residues 168-208 (LSKEELIQSMDRVDREIAKVEQQILKLKKKQQQLEEEAAKP) adopt a coiled-coil conformation. An SANT 1 domain is found at 427–478 (QFMNVWTDHEKEIFKEKFVRHPKNFGLIASYLERKNVSDCVLYYYLTKKNEN). Residues 483-493 (VRRNYPKRRGR) show a composition bias toward basic residues. Disordered stretches follow at residues 483-649 (VRRN…GSKS), 668-912 (NLLQ…FGSR), 1075-1122 (SLSD…GTPG), 1417-1436 (DLVSQESRKTPESSRQIMEG), 1470-1583 (SWGV…QRES), 1737-1851 (PGTQ…AQES), and 1916-1990 (PQME…TAHT). Composition is skewed to basic and acidic residues over residues 502–525 (SQEEKEIEKVEEEKADRNDKKEDE) and 535–548 (KEELREGAKDKIDA). Positions 502–552 (SQEEKEIEKVEEEKADRNDKKEDERREEEEKEEKEELREGAKDKIDAVAED) form a coiled coil. The segment covering 582 to 611 (ASEAAAANAVTTATTAPVTTTSTATTVAPV) has biased composition (low complexity). A compositionally biased stretch (pro residues) spans 612-627 (PVAPPPEEPTPPPPPQ). The 38-residue stretch at 628–665 (EQSLVDHGRNWGAIAKMVGSKSESQCKNFYFNYKRRHN) folds into the SANT 2 domain. Residues 689 to 699 (QCDSIASTVSA) are compositionally biased toward polar residues. Positions 700-719 (QEDDENEASNEEENPEDSEG) are enriched in acidic residues. Low complexity-rich tracts occupy residues 727-738 (ESAPSPSPAEAA) and 761-774 (DAASKPASDSSPSP). Residues 854–863 (MERLMDRAEA) are compositionally biased toward basic and acidic residues. Polar residues-rich tracts occupy residues 872 to 891 (QNISQARQESQPDNDSSATC) and 1102 to 1122 (ATSSDKPSFITGGSISQGTPG). Residues 1484–1501 (KMGERSKHEDTKSSDAIR) are compositionally biased toward basic and acidic residues. Residues 1505–1516 (TSVVSSGPSVLR) show a composition bias toward polar residues. The segment covering 1545 to 1558 (PSPMSRSSPMARSA) has biased composition (low complexity). Residues 1765–1804 (VSAERERERERERERDREREKEQRERESDRERERDRLAHA) adopt a coiled-coil conformation. Over residues 1767-1802 (AERERERERERERDREREKEQRERESDRERERDRLA) the composition is skewed to basic and acidic residues. Low complexity-rich tracts occupy residues 1803 to 1813 (HAAAAAAAASA) and 1820 to 1835 (RPVSEQPSRPSSRPSS). Residues 1842–1851 (PSPSVRAQES) are compositionally biased toward polar residues. Over residues 1921–1942 (AKPKESKNDSARSEENLSRRNA) the composition is skewed to basic and acidic residues. Residues 1958-1980 (SPYTSSSFSSSKSQSQPSSAVYS) show a composition bias toward low complexity. Residues 2012–2016 (IDVII) carry the CORNR box 1 motif. A disordered region spans residues 2022 to 2109 (SDKDGRERNS…SPPQQTIPGH (88 aa)). A compositionally biased stretch (low complexity) spans 2031-2040 (SQSSDASSSH). Basic and acidic residues predominate over residues 2043–2052 (HRYEAPRETI). The segment covering 2093–2106 (RYRQQQESPPQQTI) has biased composition (polar residues). The short motif at 2123–2127 (ICHII) is the CORNR box 2 element. Over residues 2136–2145 (PVNQPLQQPP) the composition is skewed to low complexity. The interval 2136–2222 (PVNQPLQQPP…PISPPQAPML (87 aa)) is disordered. The span at 2146–2175 (ASTFQSTNPTSTAVRTKASSRFSPESQVQP) shows a compositional bias: polar residues. A compositionally biased stretch (basic and acidic residues) spans 2190–2209 (IPDKPRGRPGKSPDRGHISE). The CORNR box 3 motif lies at 2326 to 2330 (LEDII). Disordered stretches follow at residues 2344-2446 (DHGV…YNPL) and 2464-2498 (TSMTQTSAHQQSRIWEREPAPLLSEQYETLSDSDE). A compositionally biased stretch (polar residues) spans 2353 to 2362 (QGNQSGTPNS). A compositionally biased stretch (basic residues) spans 2380–2394 (HKQKLISKYGSRKTK). Polar residues-rich tracts occupy residues 2464–2476 (TSMTQTSAHQQSR) and 2489–2498 (QYETLSDSDE).

This sequence belongs to the N-CoR nuclear receptor corepressors family. As to quaternary structure, forms a large corepressor complex that contains sin3a/b, histone deacetylases hdac1 and hdac2, rbbp4 and possibly rbbp7. Interacts with the thyroid receptor (TR, composed of rxra and thrb) and the retinoid acid receptor (RAR, composed of rxra and rara) in the absence of ligand. Interacts with tbl1xr1-A and possibly tbl1xr1-B. Interacts with zbtb33/kaiso.

Its subcellular location is the nucleus. Its function is as follows. Mediates transcriptional repression by certain nuclear receptors. Participates in complexes which promote histone deacetylation and the formation of repressive chromatin structures which may impede access by the basal transcription machinery. In association with hdac3, may play a role in the regulation of the circadian clock. The chain is Nuclear receptor corepressor 1 (ncor1) from Xenopus laevis (African clawed frog).